Consider the following 271-residue polypeptide: Ribosomal RNA small subunit methyltransferase A (271 aa).

S-adenosyl-L-methionine is bound by residues Leu20, Gly45, Glu66, Asp90, and Asn112.

It belongs to the class I-like SAM-binding methyltransferase superfamily. rRNA adenine N(6)-methyltransferase family. RsmA subfamily.

It is found in the cytoplasm. It catalyses the reaction adenosine(1518)/adenosine(1519) in 16S rRNA + 4 S-adenosyl-L-methionine = N(6)-dimethyladenosine(1518)/N(6)-dimethyladenosine(1519) in 16S rRNA + 4 S-adenosyl-L-homocysteine + 4 H(+). Specifically dimethylates two adjacent adenosines (A1518 and A1519) in the loop of a conserved hairpin near the 3'-end of 16S rRNA in the 30S particle. May play a critical role in biogenesis of 30S subunits. The chain is Ribosomal RNA small subunit methyltransferase A from Blochmanniella floridana.